The primary structure comprises 336 residues: Mitochondrial import receptor subunit TOM40 homolog (336 aa).

A disordered region spans residues 1–58; sequence MGNVLAASSPAPPPAGSPPVPGLVSVPPGFTMPPVAGLTPTPDKKEPQEERLPNPGTF. The segment covering 10–21 has biased composition (pro residues); the sequence is PAPPPAGSPPVP. Positions 42–52 are enriched in basic and acidic residues; the sequence is PDKKEPQEERL.

Belongs to the Tom40 family. Forms part of the preprotein translocase complex of the outer mitochondrial membrane (TOM complex). Interacts with mitochondrial targeting sequences.

The protein localises to the mitochondrion outer membrane. Channel-forming protein essential for import of protein precursors into mitochondria. This chain is Mitochondrial import receptor subunit TOM40 homolog (tomm40), found in Xenopus laevis (African clawed frog).